Here is a 270-residue protein sequence, read N- to C-terminus: MSDSITNIFVISDSVGETGLSLITAGTVQFPNSKFNIRRFPLTKTISLLQGILNKAKRENAIILHTFVNPELSDYVNNFGKENNLHVIDALTGVVQTLAEITGEKPLNAAGLKHKLNPDYFKRIEALEFAVTYDDGKDPSGFLKADIVLLGVSRTSKTPLSLYLANQGYKVANLPLVPKTQIPKEIYQVDKKRIFGLTNDPEVLNNIRRQRMISYGLDPDTVYSNMDNINQELEFATNLYKELGCLQINVATKSIEETATLIIESLDSED.

151-158 (GVSRTSKT) provides a ligand contact to ADP.

The protein belongs to the pyruvate, phosphate/water dikinase regulatory protein family. PDRP subfamily.

It catalyses the reaction N(tele)-phospho-L-histidyl/L-threonyl-[pyruvate, phosphate dikinase] + ADP = N(tele)-phospho-L-histidyl/O-phospho-L-threonyl-[pyruvate, phosphate dikinase] + AMP + H(+). The enzyme catalyses N(tele)-phospho-L-histidyl/O-phospho-L-threonyl-[pyruvate, phosphate dikinase] + phosphate + H(+) = N(tele)-phospho-L-histidyl/L-threonyl-[pyruvate, phosphate dikinase] + diphosphate. Bifunctional serine/threonine kinase and phosphorylase involved in the regulation of the pyruvate, phosphate dikinase (PPDK) by catalyzing its phosphorylation/dephosphorylation. The polypeptide is Putative pyruvate, phosphate dikinase regulatory protein (Ligilactobacillus salivarius (strain UCC118) (Lactobacillus salivarius)).